We begin with the raw amino-acid sequence, 634 residues long: Chaperone protein HtpG (634 aa).

An a; substrate-binding region spans residues 1 to 344 (MNETVANNKE…SNDLPLNVSR (344 aa)). Residues 345–561 (EILQDNKVTQ…DFEMGTQMAK (217 aa)) form a b region. Residues 562–634 (LLAAAGQAVP…TAINSLLTKG (73 aa)) are c.

This sequence belongs to the heat shock protein 90 family. Homodimer.

It localises to the cytoplasm. In terms of biological role, molecular chaperone. Has ATPase activity. The chain is Chaperone protein HtpG from Vibrio vulnificus (strain CMCP6).